The chain runs to 462 residues: Argininosuccinate lyase (462 aa).

This sequence belongs to the lyase 1 family. Argininosuccinate lyase subfamily.

It localises to the cytoplasm. The enzyme catalyses 2-(N(omega)-L-arginino)succinate = fumarate + L-arginine. It functions in the pathway amino-acid biosynthesis; L-arginine biosynthesis; L-arginine from L-ornithine and carbamoyl phosphate: step 3/3. This Caldicellulosiruptor saccharolyticus (strain ATCC 43494 / DSM 8903 / Tp8T 6331) protein is Argininosuccinate lyase.